The following is a 366-amino-acid chain: D-alanine--D-alanine ligase (366 aa).

The 210-residue stretch at 148–357 (KMTFEQAGLA…FPELVDRLIQ (210 aa)) folds into the ATP-grasp domain. Position 184-239 (184-239 (EAALGYPAFVKPANLGSSVGIAKVRSRQELEAALDNAASYDRRLVVEAGVVAREVE)) interacts with ATP. Mg(2+) contacts are provided by aspartate 310, glutamate 324, and asparagine 326.

The protein belongs to the D-alanine--D-alanine ligase family. It depends on Mg(2+) as a cofactor. Requires Mn(2+) as cofactor.

The protein resides in the cytoplasm. The enzyme catalyses 2 D-alanine + ATP = D-alanyl-D-alanine + ADP + phosphate + H(+). The protein operates within cell wall biogenesis; peptidoglycan biosynthesis. Functionally, cell wall formation. In Nostoc punctiforme (strain ATCC 29133 / PCC 73102), this protein is D-alanine--D-alanine ligase.